Here is a 335-residue protein sequence, read N- to C-terminus: Phosphate acyltransferase (335 aa).

It belongs to the PlsX family. In terms of assembly, homodimer. Probably interacts with PlsY.

The protein resides in the cytoplasm. It carries out the reaction a fatty acyl-[ACP] + phosphate = an acyl phosphate + holo-[ACP]. The protein operates within lipid metabolism; phospholipid metabolism. Catalyzes the reversible formation of acyl-phosphate (acyl-PO(4)) from acyl-[acyl-carrier-protein] (acyl-ACP). This enzyme utilizes acyl-ACP as fatty acyl donor, but not acyl-CoA. The chain is Phosphate acyltransferase from Heliobacterium modesticaldum (strain ATCC 51547 / Ice1).